A 151-amino-acid chain; its full sequence is D-aminoacyl-tRNA deacylase (151 aa).

Positions 136–137 match the Gly-cisPro motif, important for rejection of L-amino acids motif; sequence GP.

Belongs to the DTD family. Homodimer.

It localises to the cytoplasm. The catalysed reaction is glycyl-tRNA(Ala) + H2O = tRNA(Ala) + glycine + H(+). It catalyses the reaction a D-aminoacyl-tRNA + H2O = a tRNA + a D-alpha-amino acid + H(+). In terms of biological role, an aminoacyl-tRNA editing enzyme that deacylates mischarged D-aminoacyl-tRNAs. Also deacylates mischarged glycyl-tRNA(Ala), protecting cells against glycine mischarging by AlaRS. Acts via tRNA-based rather than protein-based catalysis; rejects L-amino acids rather than detecting D-amino acids in the active site. By recycling D-aminoacyl-tRNA to D-amino acids and free tRNA molecules, this enzyme counteracts the toxicity associated with the formation of D-aminoacyl-tRNA entities in vivo and helps enforce protein L-homochirality. This Lactococcus lactis subsp. cremoris (strain MG1363) protein is D-aminoacyl-tRNA deacylase.